A 281-amino-acid chain; its full sequence is Aldo-keto reductase MAP_3007 (281 aa).

The Proton donor role is filled by Y56. Residues L196, I234, R236, S237, A238, S245, and R272 each coordinate NADPH.

Belongs to the aldo/keto reductase family.

The sequence is that of Aldo-keto reductase MAP_3007 from Mycolicibacterium paratuberculosis (strain ATCC BAA-968 / K-10) (Mycobacterium paratuberculosis).